Reading from the N-terminus, the 102-residue chain is Acid shock protein (102 aa).

The signal sequence occupies residues 1-21; sequence MKKVLALVVAAAMGLSSAAFA. The segment covering 22–41 has biased composition (low complexity); the sequence is AETATTPAPTATTTKAAPAK. A propeptide spanning residues 22 to 58 is cleaved from the precursor; sequence AETATTPAPTATTTKAAPAKTTHHKKQHKAAPAQKAQ. Residues 22–102 are disordered; sequence AETATTPAPT…PAKPAAQPAA (81 aa). The span at 80 to 90 shows a compositional bias: basic residues; that stretch reads AAKKHAGKHSH. The span at 91-102 shows a compositional bias: low complexity; that stretch reads QQPAKPAAQPAA.

This sequence belongs to the Asr family. Proteolytic processing gives rise to the active protein.

It is found in the periplasm. In terms of biological role, required for growth and/or survival at acidic conditions. In Escherichia coli (strain 55989 / EAEC), this protein is Acid shock protein.